A 649-amino-acid chain; its full sequence is Probable potassium transport system protein Kup (649 aa).

12 helical membrane passes run 1-21, 42-62, 84-104, 126-146, 159-179, 195-215, 235-255, 286-306, 334-354, 364-384, 390-410, and 414-434; these read MAIV…LYTM, ILSL…VFIA, GAWL…DSVL, IMSG…VCLF, TFGT…LVNL, VEFL…TVFL, IYFT…GQGA, VAVL…ITGA, LYIP…LAMF, YGLA…VYIW, VGAV…FFAS, and FLHG…IMYT.

Belongs to the HAK/KUP transporter (TC 2.A.72) family.

It localises to the cell membrane. It carries out the reaction K(+)(in) + H(+)(in) = K(+)(out) + H(+)(out). Transport of potassium into the cell. Likely operates as a K(+):H(+) symporter. The sequence is that of Probable potassium transport system protein Kup from Bifidobacterium adolescentis (strain ATCC 15703 / DSM 20083 / NCTC 11814 / E194a).